Consider the following 147-residue polypeptide: Nucleoside diphosphate kinase (147 aa).

ATP contacts are provided by Lys-9, Phe-57, Arg-85, Thr-91, Arg-102, and Asn-112. At Thr-91 the chain carries Phosphothreonine. His-115 acts as the Pros-phosphohistidine intermediate in catalysis. Phosphoserine is present on Ser-122.

The protein belongs to the NDK family. Homotetramer. Mg(2+) serves as cofactor.

It localises to the cytoplasm. It carries out the reaction a 2'-deoxyribonucleoside 5'-diphosphate + ATP = a 2'-deoxyribonucleoside 5'-triphosphate + ADP. The catalysed reaction is a ribonucleoside 5'-diphosphate + ATP = a ribonucleoside 5'-triphosphate + ADP. In terms of biological role, major role in the synthesis of nucleoside triphosphates other than ATP. The ATP gamma phosphate is transferred to the NDP beta phosphate via a ping-pong mechanism, using a phosphorylated active-site intermediate. The protein is Nucleoside diphosphate kinase of Halalkalibacterium halodurans (strain ATCC BAA-125 / DSM 18197 / FERM 7344 / JCM 9153 / C-125) (Bacillus halodurans).